The primary structure comprises 419 residues: Glycine, glutamate and proline-rich protein (419 aa).

A signal peptide spans 1–16; that stretch reads MKCLVALFLSLSLVAC. Positions 74–152 are disordered; the sequence is VERESEEAEG…VDMCAGESRR (79 aa). Acidic residues predominate over residues 76–85; that stretch reads RESEEAEGEG. Residues 86-130 show a composition bias toward basic and acidic residues; it reads TDGRGGGEGEREGWGGEREGGEGEREGGEGEREGREGEREGKSSE.

This sequence in the C-terminal section; belongs to the glycosyl hydrolase 23 family. As to expression, component of the acid-insoluble organic matrix of calcified layers of the shell (at protein level).

It localises to the secreted. The chain is Glycine, glutamate and proline-rich protein from Lottia gigantea (Giant owl limpet).